Reading from the N-terminus, the 117-residue chain is Venom protein TxLP11 (117 aa).

An N-terminal signal peptide occupies residues 1 to 22; that stretch reads MNTKTLIVVFLVCLLVSEVVLA.

Post-translationally, contains 4 disulfide bonds. In terms of tissue distribution, expressed by the venom gland.

It localises to the secreted. This is Venom protein TxLP11 from Lychas mucronatus (Chinese swimming scorpion).